The sequence spans 242 residues: Pyridoxine 5'-phosphate synthase (242 aa).

N9 contacts 3-amino-2-oxopropyl phosphate. D11–H12 contacts 1-deoxy-D-xylulose 5-phosphate. R20 serves as a coordination point for 3-amino-2-oxopropyl phosphate. H45 functions as the Proton acceptor in the catalytic mechanism. The 1-deoxy-D-xylulose 5-phosphate site is built by R47 and H52. The active-site Proton acceptor is E72. 1-deoxy-D-xylulose 5-phosphate is bound at residue T102. H193 acts as the Proton donor in catalysis. 3-amino-2-oxopropyl phosphate contacts are provided by residues G194 and G215–H216.

It belongs to the PNP synthase family. Homooctamer; tetramer of dimers.

Its subcellular location is the cytoplasm. The catalysed reaction is 3-amino-2-oxopropyl phosphate + 1-deoxy-D-xylulose 5-phosphate = pyridoxine 5'-phosphate + phosphate + 2 H2O + H(+). Its pathway is cofactor biosynthesis; pyridoxine 5'-phosphate biosynthesis; pyridoxine 5'-phosphate from D-erythrose 4-phosphate: step 5/5. Catalyzes the complicated ring closure reaction between the two acyclic compounds 1-deoxy-D-xylulose-5-phosphate (DXP) and 3-amino-2-oxopropyl phosphate (1-amino-acetone-3-phosphate or AAP) to form pyridoxine 5'-phosphate (PNP) and inorganic phosphate. In Idiomarina loihiensis (strain ATCC BAA-735 / DSM 15497 / L2-TR), this protein is Pyridoxine 5'-phosphate synthase.